The chain runs to 617 residues: Chaperone protein HscA homolog (617 aa).

This sequence belongs to the heat shock protein 70 family.

Its function is as follows. Chaperone involved in the maturation of iron-sulfur cluster-containing proteins. Has a low intrinsic ATPase activity which is markedly stimulated by HscB. The polypeptide is Chaperone protein HscA homolog (Photobacterium profundum (strain SS9)).